Reading from the N-terminus, the 1233-residue chain is Rho guanine nucleotide exchange factor 10-like protein (1233 aa).

A compositionally biased stretch (pro residues) spans 1 to 10 (MASSNPPPQP). Positions 1–93 (MASSNPPPQP…GTGVPAWVSN (93 aa)) are disordered. Over residues 26–46 (EAEDDPGEAFEFDDSDDEEDT) the composition is skewed to acidic residues. Position 40 is a phosphoserine (Ser40). Residues 72–89 (PVTDPDPAAAPPGTGVPA) show a composition bias toward low complexity. 2 positions are modified to phosphotyrosine: Tyr131 and Tyr152. The segment at 159-193 (GAPRQAEDLGWSSSEFESYSEDSGEEAKPEVEPAK) is disordered. The segment covering 183 to 193 (EEAKPEVEPAK) has biased composition (basic and acidic residues). Ser240 bears the Phosphoserine mark. The DH domain occupies 275-462 (VRRHILGSIV…ETLAEKLNEQ (188 aa)). Residues 1089–1104 (QEEAEGPRAEEEKPDG) show a composition bias toward basic and acidic residues. 2 disordered regions span residues 1089–1117 (QEEA…HVGR) and 1140–1161 (PLLS…SEED).

Interacts with RHOA, RHOB and RHOC.

It localises to the cytoplasm. Acts as a guanine nucleotide exchange factor (GEF) for RHOA, RHOB and RHOC. The protein is Rho guanine nucleotide exchange factor 10-like protein (ARHGEF10L) of Pongo abelii (Sumatran orangutan).